The sequence spans 697 residues: Elongation factor G (697 aa).

The 283-residue stretch at Glu-8–Val-290 folds into the tr-type G domain. GTP-binding positions include Ala-17–Thr-24, Asp-88–His-92, and Asn-142–Asp-145.

This sequence belongs to the TRAFAC class translation factor GTPase superfamily. Classic translation factor GTPase family. EF-G/EF-2 subfamily.

It localises to the cytoplasm. Its function is as follows. Catalyzes the GTP-dependent ribosomal translocation step during translation elongation. During this step, the ribosome changes from the pre-translocational (PRE) to the post-translocational (POST) state as the newly formed A-site-bound peptidyl-tRNA and P-site-bound deacylated tRNA move to the P and E sites, respectively. Catalyzes the coordinated movement of the two tRNA molecules, the mRNA and conformational changes in the ribosome. The sequence is that of Elongation factor G from Nitrosococcus oceani (strain ATCC 19707 / BCRC 17464 / JCM 30415 / NCIMB 11848 / C-107).